Reading from the N-terminus, the 491-residue chain is 23S rRNA (uracil(1939)-C(5))-methyltransferase RlmD (491 aa).

Positions 1 to 10 are enriched in basic and acidic residues; sequence MSDPTEHPEI. Positions 1 to 28 are disordered; sequence MSDPTEHPEILQDPSSSAPVQGRTDLPP. The TRAM domain occupies 18-81; it reads APVQGRTDLP…NNWEQASLTA (64 aa). Positions 94, 104, 107, and 186 each coordinate [4Fe-4S] cluster. The S-adenosyl-L-methionine site is built by glutamine 294, phenylalanine 323, asparagine 328, glutamate 344, asparagine 379, and aspartate 400. Cysteine 447 (nucleophile) is an active-site residue.

It belongs to the class I-like SAM-binding methyltransferase superfamily. RNA M5U methyltransferase family. RlmD subfamily.

The enzyme catalyses uridine(1939) in 23S rRNA + S-adenosyl-L-methionine = 5-methyluridine(1939) in 23S rRNA + S-adenosyl-L-homocysteine + H(+). Functionally, catalyzes the formation of 5-methyl-uridine at position 1939 (m5U1939) in 23S rRNA. The polypeptide is 23S rRNA (uracil(1939)-C(5))-methyltransferase RlmD (Paracidovorax citrulli (strain AAC00-1) (Acidovorax citrulli)).